We begin with the raw amino-acid sequence, 236 residues long: EP300-interacting inhibitor of differentiation 2 (236 aa).

The segment covering 1–15 (MSQLPAVSSAPQTGA) has biased composition (polar residues). A disordered region spans residues 1-102 (MSQLPAVSSA…REGPAAAAAS (102 aa)). Composition is skewed to low complexity over residues 32-68 (RALPGPARPGETRGRPMAAAREGPAAPAAAARGGRVA) and 75-102 (AAAARGGPGAAPRGGAAAREGPAAAAAS). Omega-N-methylarginine occurs at positions 63 and 79. Residues 170–190 (RIQELEERRRRFVEACRAREA) are a coiled coil.

As to quaternary structure, heterodimer with EID2B. Interacts with the C-terminus of EP300. Interacts with HDAC1 and HDAC2. Interacts with SMAD2, SMAD4 and with the MH2 domain of SMAD3. As to expression, expressed in heart, brain, kidney and pancreas. Not detected in placenta.

It is found in the nucleus. Its function is as follows. Interacts with EP300 and acts as a repressor of MYOD-dependent transcription and muscle differentiation. Inhibits EP300 histone acetyltransferase activity. Acts as a repressor of TGFB/SMAD transcriptional responses. May act as a repressor of the TGFB/SMAD3-dependent signaling by selectively blocking formation of TGFB-induced SMAD3-SMAD4 complex. This chain is EP300-interacting inhibitor of differentiation 2, found in Mus musculus (Mouse).